The chain runs to 723 residues: Probable C-mannosyltransferase DPY19L4 (723 aa).

Residues 1–33 (MAEEEGPPVELRQRKKPKSSENKESAKEEKISD) form a disordered region. The residue at position 2 (Ala2) is an N-acetylalanine. The segment covering 18 to 32 (KSSENKESAKEEKIS) has biased composition (basic and acidic residues). The next 12 membrane-spanning stretches (helical) occupy residues 52–72 (IFIGCLAAVTSGMMYALYLSA), 161–178 (VYFYIGIVFGLQGIYVTA), 184–202 (WLMSGTWLAGMLTVAWFVI), 222–240 (LPYFACQIAALTGYLKSNL), 260–280 (MMMWEYSHYLLFLQAISLFLL), 292–310 (YEVYKIYIFSLFLGYLLQF), 316–337 (LVSPLLSLVAALMLAKCLQLNV), 349–370 (VINFYLVCTLTITLNIIMKMFV), 421–441 (LLPFYILVLIICFLSMLQVIF), 466–486 (IIYHVIHTILLGSLAMVIEGL), 489–509 (IWIPYVCMLAAFGVCSPELWM), and 522–542 (PILLALILSMAVPTIIGLSLW).

It belongs to the dpy-19 family. Widely expressed.

Its subcellular location is the membrane. In terms of biological role, probable C-mannosyltransferase that mediates C-mannosylation of tryptophan residues on target proteins. This is Probable C-mannosyltransferase DPY19L4 (DPY19L4) from Homo sapiens (Human).